Reading from the N-terminus, the 262-residue chain is Phosphonates import ATP-binding protein PhnC (262 aa).

The region spanning 5–253 (IRVEKLAKTF…RFDHLYRSIN (249 aa)) is the ABC transporter domain. Residue 37–44 (GPSGSGKS) participates in ATP binding.

This sequence belongs to the ABC transporter superfamily. Phosphonates importer (TC 3.A.1.9.1) family. As to quaternary structure, the complex is composed of two ATP-binding proteins (PhnC), two transmembrane proteins (PhnE) and a solute-binding protein (PhnD).

It is found in the cell inner membrane. The catalysed reaction is phosphonate(out) + ATP + H2O = phosphonate(in) + ADP + phosphate + H(+). In terms of biological role, part of the ABC transporter complex PhnCDE involved in phosphonates import. Responsible for energy coupling to the transport system. The chain is Phosphonates import ATP-binding protein PhnC from Escherichia coli O6:K15:H31 (strain 536 / UPEC).